The primary structure comprises 437 residues: Sodium/bile acid cotransporter 4 (437 aa).

Over 1 to 103 (MDSLDNTTLL…PPFWDTPLNH (103 aa)) the chain is Extracellular. N-linked (GlcNAc...) asparagine glycans are attached at residues Asn6 and Asn20. A disordered region spans residues 15–79 (SLLPDNLTLS…SSSLTVGVAG (65 aa)). Polar residues predominate over residues 22 to 41 (TLSPNAGSPSASTLSPLAVT). The segment covering 42–74 (SSPGPGLSLAPSPSIGFSPEATPTPEPTSSSLT) has biased composition (low complexity). Residues 104-124 (GLNVFVGAALCITMLGLGCTV) traverse the membrane as a helical segment. The Cytoplasmic segment spans residues 125–140 (DVNHFGAHVRRPVGAL). A helical transmembrane segment spans residues 141-161 (LAALCQFGFLPLLAFLLALIF). The Extracellular portion of the chain corresponds to 162-197 (KLDEVAAVAVLLCGCCPGGNLSNLMSLLVDGDMNLS). N-linked (GlcNAc...) asparagine glycans are attached at residues Asn181 and Asn195. The chain crosses the membrane as a helical span at residues 198–218 (IIMTISSTLLALVLMPLCLWI). The Cytoplasmic segment spans residues 219–233 (YSRAWINTPLVQLLP). The helical transmembrane segment at 234–254 (LGAVTLTLCSTLIPIGLGVFI) threads the bilayer. Residues 255 to 267 (RYKYNRVADYIVK) are Extracellular-facing. A helical transmembrane segment spans residues 268–288 (VSLWSLLVTLVVLFIMTGTML). The Cytoplasmic portion of the chain corresponds to 289–291 (GPE). The chain crosses the membrane as a helical span at residues 292–312 (LLASIPATVYVVAIFMPLAGY). The Extracellular segment spans residues 313–360 (ASGYGLATLFHLPPNCKRTVCLETGSQNVQLCTAILKLAFPPRFIGSM). Residues 361-381 (YMFPLLYALFQSAEAGVFVLI) form a helical membrane-spanning segment. The Cytoplasmic portion of the chain corresponds to 382 to 437 (YKMYGSEILHKREALDEDEDTDISYKKLKEEEMADTSYGTVGTDDLVMMETTQTAL).

It belongs to the bile acid:sodium symporter (BASS) (TC 2.A.28) family. Post-translationally, activated following N-terminal proteolytic cleavage by thrombin and/or proteases. In terms of tissue distribution, highest expression in the brain and significantly above background levels in the eye, prostate, and whole embryo tissue preparations.

The protein localises to the cell membrane. Functionally, transporter for bile acids. In Mus musculus (Mouse), this protein is Sodium/bile acid cotransporter 4 (Slc10a4).